A 378-amino-acid polypeptide reads, in one-letter code: P2X receptor A (378 aa).

Topologically, residues 1-27 are cytoplasmic; it reads MGFSFDWDDIFQYSTVKIVRIRDRRLG. Residues 28-48 traverse the membrane as a helical segment; the sequence is ILHLSFLVGIVAYIVVYSAII. The Lumenal portion of the chain corresponds to 49 to 307; the sequence is KKGYLFTEVP…IQTGTIGSFH (259 aa). The interval 290–303 is pore-forming motif; it reads RHGIRVIFIQTGTI. Residues 308-328 form a helical membrane-spanning segment; that stretch reads FQTLLLTLVSGLGLLAVATTV. Residues 329-378 lie on the Cytoplasmic side of the membrane; it reads VDQLAIRLLPQRKSYSSLKFQVTESMSNPMKKRITTDEGEDVLYTRIEGL.

It belongs to the P2X receptor family.

The protein resides in the contractile vacuole membrane. In terms of biological role, P2X receptors are ATP-gated ion channels that play a role in intracellular calcium signaling. Not required for the purinergic response to extracellular nucleotides. Inward currents evoked by intracellular ATP and ATP analogs. Exclusively selective for ATP over other nucleotides. Insensitive to P2 receptor antagonists PPADS, suramin and 2',3'-O-(2,4,6-trinitrophenyl)-ATP but inhibited by nanomolar concentrations of copper and sodium ion. More permeable to ammonium than either sodium or potassium ions and less permeable to choline. It has been reported that p2xA is not essential for osmoregulation, however this information is in contradiction with another source which indicates that p2xA is required for osmoregulation. Found to be permeable to chloride ions. Inhibited by copper and sodium ions. In Dictyostelium discoideum (Social amoeba), this protein is P2X receptor A (p2xA).